A 448-amino-acid polypeptide reads, in one-letter code: UPF0210 protein Pisl_0759 (448 aa).

This sequence belongs to the UPF0210 family.

The protein is UPF0210 protein Pisl_0759 of Pyrobaculum islandicum (strain DSM 4184 / JCM 9189 / GEO3).